We begin with the raw amino-acid sequence, 2462 residues long: Piezo-type mechanosensitive ion channel homolog (2462 aa).

19 consecutive transmembrane segments (helical) span residues 5–25 (LVGF…WSVI), 27–47 (FLDL…GYRF), 57–77 (IFIF…IWAA), 105–125 (TVMY…ADIY), 163–183 (AVQL…FFIG), 207–227 (LYIY…PINF), 248–268 (EGPD…LSYV), 325–345 (FFTY…FHFA), 347–367 (LCAF…PSLF), 374–394 (GLLL…NVAF), 404–424 (FGLG…FLYL), 467–487 (LIFL…IFFL), 502–522 (SLIL…IDLV), 554–574 (IALL…LFSF), 653–673 (VYLV…LLWI), 694–714 (AVLV…QLWL), 730–750 (APLL…QLYS), 792–812 (FYAS…GLVI), and 826–846 (SFLI…LWGM). Residues 927 to 947 (ASVSSSNGENPSSTDHASISM) form a disordered region. Over residues 928 to 939 (SVSSSNGENPSS) the composition is skewed to low complexity. 8 helical membrane-spanning segments follow: residues 1027-1047 (FWIE…ALLL), 1050-1070 (FALL…CVLL), 1078-1098 (LWPV…VATW), 1143-1160 (TLIS…KLRA), 1204-1224 (LYCY…TGTL), 1228-1248 (ILHL…LEIL), 1260-1280 (VYNF…VGNF), and 1310-1330 (SALV…MFSS). Residues 1347-1400 (AIVREQEKKAARKTEQLQQIREAEEKKRQRNLQVEKMKSEMLNLRVQLHRMNSD) are a coiled coil. A disordered region spans residues 1543-1583 (SDTNEQSSVDDEVYDEMESQKRKHTPFERSTSLQSDRSSDG). Residues 1550–1559 (SVDDEVYDEM) show a composition bias toward acidic residues. Polar residues predominate over residues 1570–1583 (ERSTSLQSDRSSDG). The next 8 helical transmembrane spans lie at 1611-1631 (FIIA…AALF), 1647-1667 (VIML…QIII), 1916-1936 (YIFG…QSVI), 1956-1976 (FVII…IYLC), 1984-2004 (VYYL…AWSI), 2012-2032 (AGLA…LQAI), 2130-2150 (GICL…MYSS), and 2369-2389 (FLGD…FVLA).

This sequence belongs to the PIEZO (TC 1.A.75) family.

The protein localises to the membrane. Its function is as follows. Pore-forming subunit of a mechanosensitive non-specific cation channel, that conducts both sodium and potassium ions. This Arabidopsis thaliana (Mouse-ear cress) protein is Piezo-type mechanosensitive ion channel homolog.